Consider the following 123-residue polypeptide: Small ribosomal subunit protein uS12 (123 aa).

Asp-89 is modified (3-methylthioaspartic acid). The tract at residues 104–123 (TQGVKDRRQRRSKYGAKRPK) is disordered. Residues 110 to 123 (RRQRRSKYGAKRPK) are compositionally biased toward basic residues.

Belongs to the universal ribosomal protein uS12 family. In terms of assembly, part of the 30S ribosomal subunit. Contacts proteins S8 and S17. May interact with IF1 in the 30S initiation complex.

Functionally, with S4 and S5 plays an important role in translational accuracy. Interacts with and stabilizes bases of the 16S rRNA that are involved in tRNA selection in the A site and with the mRNA backbone. Located at the interface of the 30S and 50S subunits, it traverses the body of the 30S subunit contacting proteins on the other side and probably holding the rRNA structure together. The combined cluster of proteins S8, S12 and S17 appears to hold together the shoulder and platform of the 30S subunit. The polypeptide is Small ribosomal subunit protein uS12 (Parvibaculum lavamentivorans (strain DS-1 / DSM 13023 / NCIMB 13966)).